The chain runs to 82 residues: ATP synthase subunit c (82 aa).

The next 2 membrane-spanning stretches (helical) occupy residues 6-26 (AAASVIAAALAVGLAAIGPGI) and 57-77 (LAFMESLTIYGLLVSIVLLFA).

Belongs to the ATPase C chain family. As to quaternary structure, F-type ATPases have 2 components, F(1) - the catalytic core - and F(0) - the membrane proton channel. F(1) has five subunits: alpha(3), beta(3), gamma(1), delta(1), epsilon(1). F(0) has four main subunits: a(1), b(1), b'(1) and c(10-14). The alpha and beta chains form an alternating ring which encloses part of the gamma chain. F(1) is attached to F(0) by a central stalk formed by the gamma and epsilon chains, while a peripheral stalk is formed by the delta, b and b' chains.

Its subcellular location is the cell inner membrane. Functionally, f(1)F(0) ATP synthase produces ATP from ADP in the presence of a proton or sodium gradient. F-type ATPases consist of two structural domains, F(1) containing the extramembraneous catalytic core and F(0) containing the membrane proton channel, linked together by a central stalk and a peripheral stalk. During catalysis, ATP synthesis in the catalytic domain of F(1) is coupled via a rotary mechanism of the central stalk subunits to proton translocation. Its function is as follows. Key component of the F(0) channel; it plays a direct role in translocation across the membrane. A homomeric c-ring of between 10-14 subunits forms the central stalk rotor element with the F(1) delta and epsilon subunits. This is ATP synthase subunit c from Gloeobacter violaceus (strain ATCC 29082 / PCC 7421).